Consider the following 188-residue polypeptide: Movement protein (188 aa).

The protein belongs to the tombusvirus/aureusvirus movement protein p22 family. Interacts with host protein HFI22. Phosphorylated.

The protein localises to the host membrane. In terms of biological role, transports viral genome to neighboring plant cells directly through plasmosdesmata, without any budding. The movement protein allows efficient cell to cell propagation, by bypassing the host cell wall barrier. The protein is Movement protein of Capsicum annuum (Capsicum pepper).